The sequence spans 218 residues: Large ribosomal subunit protein uL3 (218 aa).

Residues 127 to 167 (GFSRGPMSHGSKNHRLPGSIGAGTTPGRVYPGKRMAGRMGG) are disordered.

Belongs to the universal ribosomal protein uL3 family. Part of the 50S ribosomal subunit. Forms a cluster with proteins L14 and L19.

Functionally, one of the primary rRNA binding proteins, it binds directly near the 3'-end of the 23S rRNA, where it nucleates assembly of the 50S subunit. In Prochlorococcus marinus (strain NATL1A), this protein is Large ribosomal subunit protein uL3.